Reading from the N-terminus, the 210-residue chain is Oligoribonuclease (210 aa).

The Exonuclease domain maps to 12 to 177; it reads LVWIDLEMTG…ADIVESIREL (166 aa). The active site involves Y134.

The protein belongs to the oligoribonuclease family.

It is found in the cytoplasm. Its function is as follows. 3'-to-5' exoribonuclease specific for small oligoribonucleotides. This chain is Oligoribonuclease, found in Corynebacterium diphtheriae (strain ATCC 700971 / NCTC 13129 / Biotype gravis).